The chain runs to 463 residues: Oxidoreductase OXR1 (463 aa).

Residues 59-63 (GGSYS), Val-154, and Asp-366 contribute to the 6-hydroxy-FAD site.

Belongs to the FAD-dependent oxidoreductase family. 6-hydroxy-FAD serves as cofactor.

It functions in the pathway siderophore biosynthesis. Functionally, oxidoreductase; part of the gene cluster that mediates the biosynthesis of hydroxamate-containing siderophores that play a critical role in virulence via intracellular iron acquisition during macrophage infection. This chain is Oxidoreductase OXR1, found in Ajellomyces capsulatus (Darling's disease fungus).